We begin with the raw amino-acid sequence, 313 residues long: N(5)-(carboxyethyl)ornithine synthase (313 aa).

The pyruvate site is built by Arg15, Lys71, and His92. NADP(+) is bound at residue 171–176 (GSGNVA).

This sequence belongs to the AlaDH/PNT family. CEOS subfamily. Homotetramer.

It catalyses the reaction N(5)-[1(S)-1-carboxyethyl]-L-ornithine + NADP(+) + H2O = L-ornithine + pyruvate + NADPH + H(+). With respect to regulation, is potently inhibited by the reaction product N(5)-(L-1-carboxyethyl)-L-ornithine. Functionally, catalyzes the NADPH-dependent reductive condensation between pyruvic acid and the side chain amino group of L-ornithine to form N(5)-(L-1-carboxyethyl)-L-ornithine. To a lesser extent, can also use L-lysine as substrate (yielding N(6)-(L-1-carboxyethyl)-L-lysine). NADH cannot replace NADPH in the condensation reaction. This chain is N(5)-(carboxyethyl)ornithine synthase (ceo), found in Lactococcus lactis subsp. lactis (Streptococcus lactis).